The following is a 216-amino-acid chain: Holliday junction branch migration complex subunit RuvA (216 aa).

The segment at 1-64 is domain I; the sequence is MISFIKGVLI…EDAQQLYGFK (64 aa). Positions 65–143 are domain II; that stretch reads SKVDKKVFQE…KMANEIYAQT (79 aa). Residues 144–163 form a flexible linker region; that stretch reads SGTTTTSQDSQAQQAPTSVV. The domain III stretch occupies residues 164-216; the sequence is LANSIFNESVDALLALGYKQKDAEKMARSAMGDATTAAEVIRKALQGSIKSKR.

The protein belongs to the RuvA family. In terms of assembly, homotetramer. Forms an RuvA(8)-RuvB(12)-Holliday junction (HJ) complex. HJ DNA is sandwiched between 2 RuvA tetramers; dsDNA enters through RuvA and exits via RuvB. An RuvB hexamer assembles on each DNA strand where it exits the tetramer. Each RuvB hexamer is contacted by two RuvA subunits (via domain III) on 2 adjacent RuvB subunits; this complex drives branch migration. In the full resolvosome a probable DNA-RuvA(4)-RuvB(12)-RuvC(2) complex forms which resolves the HJ.

The protein localises to the cytoplasm. In terms of biological role, the RuvA-RuvB-RuvC complex processes Holliday junction (HJ) DNA during genetic recombination and DNA repair, while the RuvA-RuvB complex plays an important role in the rescue of blocked DNA replication forks via replication fork reversal (RFR). RuvA specifically binds to HJ cruciform DNA, conferring on it an open structure. The RuvB hexamer acts as an ATP-dependent pump, pulling dsDNA into and through the RuvAB complex. HJ branch migration allows RuvC to scan DNA until it finds its consensus sequence, where it cleaves and resolves the cruciform DNA. The sequence is that of Holliday junction branch migration complex subunit RuvA from Francisella tularensis subsp. mediasiatica (strain FSC147).